The primary structure comprises 342 residues: WW domain binding protein 1-like (342 aa).

Residues 42 to 62 (LWWFWLVWTIIIILSCCCVCH) traverse the membrane as a helical segment. Disordered stretches follow at residues 133–247 (LPPQ…RRFT) and 292–320 (PGDE…RPPA). Residues 158-173 (SSPLSEPSRSSTRPPS) are compositionally biased toward low complexity. Ser173 carries the phosphoserine modification. Residues 212 to 240 (LDKDAECREELLKDDSSEHGAPDSKEKTP) are compositionally biased toward basic and acidic residues.

The protein localises to the membrane. This chain is WW domain binding protein 1-like (WBP1L), found in Homo sapiens (Human).